Here is a 491-residue protein sequence, read N- to C-terminus: Inositol-pentakisphosphate 2-kinase (491 aa).

The short motif at 136–140 is the EXKPK motif element; it reads EIKPK. Phosphoserine is present on S282.

Belongs to the IPK1 type 2 family. Ubiquitously expressed, with high expression in heart, brain, testis and placenta.

It is found in the cytoplasm. The protein resides in the nucleus. The catalysed reaction is 1D-myo-inositol 1,3,4,5,6-pentakisphosphate + ATP = 1D-myo-inositol hexakisphosphate + ADP + H(+). Functionally, phosphorylates Ins(1,3,4,5,6)P5 at position 2 to form Ins(1,2,3,4,5,6)P6 (InsP6 or phytate). InsP6 is involved in many processes such as mRNA export, non-homologous end-joining, endocytosis, ion channel regulation. It also protects cells from TNF-alpha-induced apoptosis. The sequence is that of Inositol-pentakisphosphate 2-kinase (IPPK) from Homo sapiens (Human).